The following is a 478-amino-acid chain: Dihydrolipoyl dehydrogenase (478 aa).

FAD is bound by residues 36 to 45 (ERYSTLGGVC), Lys54, and Ala117. Cys45 and Cys50 form a disulfide bridge. NAD(+) contacts are provided by residues 183–187 (GGGII), Glu206, Val239, and 270–273 (AIGR). FAD-binding residues include Asp313 and Ala321. His445 acts as the Proton acceptor in catalysis.

The protein belongs to the class-I pyridine nucleotide-disulfide oxidoreductase family. Homodimer. Requires FAD as cofactor.

Its subcellular location is the cytoplasm. The enzyme catalyses N(6)-[(R)-dihydrolipoyl]-L-lysyl-[protein] + NAD(+) = N(6)-[(R)-lipoyl]-L-lysyl-[protein] + NADH + H(+). Its function is as follows. Lipoamide dehydrogenase is a component of the alpha-ketoacid dehydrogenase complexes. This chain is Dihydrolipoyl dehydrogenase (lpdA), found in Haemophilus influenzae (strain ATCC 51907 / DSM 11121 / KW20 / Rd).